The sequence spans 173 residues: Shikimate kinase (173 aa).

Residue 16–21 coordinates ATP; that stretch reads GSGKTT. Thr-20 serves as a coordination point for Mg(2+). The substrate site is built by Asp-38, Arg-62, and Gly-83. Arg-120 is a binding site for ATP. Residue Arg-139 coordinates substrate. Residue Arg-156 coordinates ATP.

Belongs to the shikimate kinase family. Monomer. The cofactor is Mg(2+).

The protein resides in the cytoplasm. It carries out the reaction shikimate + ATP = 3-phosphoshikimate + ADP + H(+). It participates in metabolic intermediate biosynthesis; chorismate biosynthesis; chorismate from D-erythrose 4-phosphate and phosphoenolpyruvate: step 5/7. Catalyzes the specific phosphorylation of the 3-hydroxyl group of shikimic acid using ATP as a cosubstrate. The protein is Shikimate kinase of Corynebacterium diphtheriae (strain ATCC 700971 / NCTC 13129 / Biotype gravis).